We begin with the raw amino-acid sequence, 342 residues long: MNHSLKPWNTFGIDHNAQHIVCAEDEQQLLNAWQYATAEGQPVLILGEGSNVLFLEDYRGTVIINRIKGIEIHDEPDAWYLHVGAGENWHRLVKYTLQEGMPGLENLALIPGCVGSSPIQNIGAYGVELQRVCAYVDCVELATGKQVRLTAKECRFGYRDSIFKHEYQDRFAIVAVGLRLLKEWQPVLTYGDLTRLDPTTVTPQQVFNAVCHMRTTKLPDPKVNGNAGSFFKNPVVSAETAKALLAQFPTAPNYPQAGGSVKLAAGWLIDQCQLKGMQMGGAAVHRQQALVLINEDNAKSEDVVQLAHHVRQKVGEKFNVWLEPEVRFIGASGEVSAVETIS.

An FAD-binding PCMH-type domain is found at 13–183 (IDHNAQHIVC…VAVGLRLLKE (171 aa)). Residue Arg159 is part of the active site. Ser229 functions as the Proton donor in the catalytic mechanism. Glu325 is an active-site residue.

This sequence belongs to the MurB family. FAD serves as cofactor.

It localises to the cytoplasm. It carries out the reaction UDP-N-acetyl-alpha-D-muramate + NADP(+) = UDP-N-acetyl-3-O-(1-carboxyvinyl)-alpha-D-glucosamine + NADPH + H(+). It functions in the pathway cell wall biogenesis; peptidoglycan biosynthesis. Its function is as follows. Cell wall formation. This chain is UDP-N-acetylenolpyruvoylglucosamine reductase, found in Shigella boydii serotype 4 (strain Sb227).